We begin with the raw amino-acid sequence, 362 residues long: S-adenosylmethionine-dependent nucleotide dehydratase RSAD2 (362 aa).

The disordered stretch occupies residues 49–71 (QQLQGKTEAGEPPRAQEDSHLPT). Residues 56–68 (EAGEPPRAQEDSH) are compositionally biased toward basic and acidic residues. One can recognise a Radical SAM core domain in the interval 70-290 (PTTPTSVNYH…LDRHKDVSCL (221 aa)). Residues C84, C88, and C91 each coordinate [4Fe-4S] cluster. K198 is modified (N6-acetyllysine). Residue K207 forms a Glycyl lysine isopeptide (Lys-Gly) (interchain with G-Cter in ubiquitin) linkage.

This sequence belongs to the radical SAM superfamily. RSAD2 family. As to quaternary structure, homodimer. Interacts with IRAK1 and TRAF6. Interacts with FPPS. Interacts with HADHB. Interacts (via C-terminus) with VAPA/VAP33 (via C-terminus). [4Fe-4S] cluster serves as cofactor. Post-translationally, acetylated by HAT1. HAT1-mediated acetylation of Lys-198 in turn recruits UBE4A that stimulates RSAD2 polyubiquitination leading to proteasomal degradation. In terms of processing, 'Lys-6'-linked polyubiquitination at Lys-207 leads to RSAD2 protein degradation.

It localises to the endoplasmic reticulum membrane. Its subcellular location is the golgi apparatus. The protein localises to the endoplasmic reticulum. The protein resides in the lipid droplet. It is found in the mitochondrion. It localises to the mitochondrion inner membrane. Its subcellular location is the mitochondrion outer membrane. The enzyme catalyses CTP + AH2 + S-adenosyl-L-methionine = 3'-deoxy-3',4'-didehydro-CTP + 5'-deoxyadenosine + L-methionine + A + H2O + H(+). With respect to regulation, IRAK1 and TRAF6 synergistically activate RSAD2 increasing its activity with CTP as substrate about 10-fold. Interferon-inducible antiviral protein which plays a major role in the cell antiviral state induced by type I and type II interferon. Catalyzes the conversion of cytidine triphosphate (CTP) to 3'-deoxy-3',4'-didehydro-CTP (ddhCTP) via a SAM-dependent radical mechanism. In turn, ddhCTP acts as a chain terminator for the RNA-dependent RNA polymerases from multiple viruses and directly inhibits viral replication. Therefore, inhibits a wide range of DNA and RNA viruses. Also promotes TLR7 and TLR9-dependent production of IFN-beta production in plasmacytoid dendritic cells (pDCs) by facilitating 'Lys-63'-linked ubiquitination of IRAK1 by TRAF6. Plays a role in CD4+ T-cells activation and differentiation. Facilitates T-cell receptor (TCR)-mediated GATA3 activation and optimal T-helper 2 (Th2) cytokine production by modulating NFKB1 and JUNB activities. Can inhibit secretion of soluble proteins. The chain is S-adenosylmethionine-dependent nucleotide dehydratase RSAD2 from Sus scrofa (Pig).